A 108-amino-acid chain; its full sequence is Phosphoribosyl-ATP pyrophosphatase (108 aa).

The protein belongs to the PRA-PH family.

It localises to the cytoplasm. It carries out the reaction 1-(5-phospho-beta-D-ribosyl)-ATP + H2O = 1-(5-phospho-beta-D-ribosyl)-5'-AMP + diphosphate + H(+). Its pathway is amino-acid biosynthesis; L-histidine biosynthesis; L-histidine from 5-phospho-alpha-D-ribose 1-diphosphate: step 2/9. The chain is Phosphoribosyl-ATP pyrophosphatase from Geobacter sulfurreducens (strain ATCC 51573 / DSM 12127 / PCA).